A 73-amino-acid chain; its full sequence is Antimicrobial peptide 6 (73 aa).

The N-terminal stretch at 1-22 (MQIKHLITLFFLVLIVADQCSA) is a signal peptide. Positions 45–73 (EISTQIDQYRNLQKREAELEELLDRLPMY) are excised as a propeptide.

Belongs to the non-disulfide-bridged peptide (NDBP) superfamily. Short antimicrobial peptide (group 4) family. In terms of tissue distribution, expressed by the venom gland.

It is found in the secreted. In terms of biological role, antibacterial peptide. The sequence is that of Antimicrobial peptide 6 from Tityus costatus (Brazilian scorpion).